The chain runs to 267 residues: Diaminopimelate epimerase (267 aa).

Substrate contacts are provided by N15 and N66. Residue C75 is the Proton donor of the active site. Substrate-binding positions include 76-77, N150, N183, and 201-202; these read GN and ER. C210 serves as the catalytic Proton acceptor. 211–212 provides a ligand contact to substrate; sequence GT.

Belongs to the diaminopimelate epimerase family. In terms of assembly, homodimer.

The protein resides in the cytoplasm. It catalyses the reaction (2S,6S)-2,6-diaminopimelate = meso-2,6-diaminopimelate. It participates in amino-acid biosynthesis; L-lysine biosynthesis via DAP pathway; DL-2,6-diaminopimelate from LL-2,6-diaminopimelate: step 1/1. Catalyzes the stereoinversion of LL-2,6-diaminopimelate (L,L-DAP) to meso-diaminopimelate (meso-DAP), a precursor of L-lysine and an essential component of the bacterial peptidoglycan. The chain is Diaminopimelate epimerase from Bacteroides thetaiotaomicron (strain ATCC 29148 / DSM 2079 / JCM 5827 / CCUG 10774 / NCTC 10582 / VPI-5482 / E50).